Reading from the N-terminus, the 265-residue chain is 4-hydroxy-2-oxo-heptane-1,7-dioate aldolase (265 aa).

His45 acts as the Proton acceptor in catalysis. Gln147 provides a ligand contact to substrate. Glu149 is an a divalent metal cation binding site. Residues Ala174 and Asp175 each contribute to the substrate site. Asp175 contacts a divalent metal cation.

The protein belongs to the HpcH/HpaI aldolase family. Homohexamer; trimer of dimers. Requires a divalent metal cation as cofactor.

The catalysed reaction is 4-hydroxy-2-oxoheptanedioate = succinate semialdehyde + pyruvate. The protein operates within aromatic compound metabolism; 4-hydroxyphenylacetate degradation; pyruvate and succinate semialdehyde from 4-hydroxyphenylacetate: step 7/7. In terms of biological role, catalyzes the reversible retro-aldol cleavage of 4-hydroxy-2-ketoheptane-1,7-dioate (HKHD) to pyruvate and succinic semialdehyde. The chain is 4-hydroxy-2-oxo-heptane-1,7-dioate aldolase from Klebsiella pneumoniae subsp. pneumoniae (strain ATCC 700721 / MGH 78578).